Here is a 259-residue protein sequence, read N- to C-terminus: tRNA (guanine-N(7)-)-methyltransferase (259 aa).

Positions 1 to 73 are disordered; it reads MGHHGQMHAQ…GPAEDPDRPG (73 aa). 4 residues coordinate S-adenosyl-L-methionine: Glu91, Glu116, Asn143, and Asp166. The active site involves Asp166. Substrate is bound by residues Lys170, Asp202, and 238 to 241; that span reads TKYE.

The protein belongs to the class I-like SAM-binding methyltransferase superfamily. TrmB family.

The catalysed reaction is guanosine(46) in tRNA + S-adenosyl-L-methionine = N(7)-methylguanosine(46) in tRNA + S-adenosyl-L-homocysteine. It participates in tRNA modification; N(7)-methylguanine-tRNA biosynthesis. Its function is as follows. Catalyzes the formation of N(7)-methylguanine at position 46 (m7G46) in tRNA. The protein is tRNA (guanine-N(7)-)-methyltransferase of Mycolicibacterium paratuberculosis (strain ATCC BAA-968 / K-10) (Mycobacterium paratuberculosis).